Reading from the N-terminus, the 159-residue chain is 2-C-methyl-D-erythritol 2,4-cyclodiphosphate synthase (159 aa).

The a divalent metal cation site is built by aspartate 8 and histidine 10. 4-CDP-2-C-methyl-D-erythritol 2-phosphate-binding positions include 8 to 10 (DVH) and 34 to 35 (HS). Histidine 42 contributes to the a divalent metal cation binding site. 4-CDP-2-C-methyl-D-erythritol 2-phosphate-binding positions include 56-58 (DIG), 61-65 (FPDTD), 100-106 (AQAPKML), 132-135 (TTTE), phenylalanine 139, and arginine 142.

This sequence belongs to the IspF family. In terms of assembly, homotrimer. Requires a divalent metal cation as cofactor.

It carries out the reaction 4-CDP-2-C-methyl-D-erythritol 2-phosphate = 2-C-methyl-D-erythritol 2,4-cyclic diphosphate + CMP. It participates in isoprenoid biosynthesis; isopentenyl diphosphate biosynthesis via DXP pathway; isopentenyl diphosphate from 1-deoxy-D-xylulose 5-phosphate: step 4/6. In terms of biological role, involved in the biosynthesis of isopentenyl diphosphate (IPP) and dimethylallyl diphosphate (DMAPP), two major building blocks of isoprenoid compounds. Catalyzes the conversion of 4-diphosphocytidyl-2-C-methyl-D-erythritol 2-phosphate (CDP-ME2P) to 2-C-methyl-D-erythritol 2,4-cyclodiphosphate (ME-CPP) with a corresponding release of cytidine 5-monophosphate (CMP). This Citrobacter koseri (strain ATCC BAA-895 / CDC 4225-83 / SGSC4696) protein is 2-C-methyl-D-erythritol 2,4-cyclodiphosphate synthase.